Here is a 357-residue protein sequence, read N- to C-terminus: UDP-N-acetylglucosamine--N-acetylmuramyl-(pentapeptide) pyrophosphoryl-undecaprenol N-acetylglucosamine transferase (357 aa).

UDP-N-acetyl-alpha-D-glucosamine contacts are provided by residues 15–17 (TGG), Asn-124, Arg-165, Ser-194, and Gln-288.

The protein belongs to the glycosyltransferase 28 family. MurG subfamily.

The protein resides in the cell inner membrane. It catalyses the reaction di-trans,octa-cis-undecaprenyl diphospho-N-acetyl-alpha-D-muramoyl-L-alanyl-D-glutamyl-meso-2,6-diaminopimeloyl-D-alanyl-D-alanine + UDP-N-acetyl-alpha-D-glucosamine = di-trans,octa-cis-undecaprenyl diphospho-[N-acetyl-alpha-D-glucosaminyl-(1-&gt;4)]-N-acetyl-alpha-D-muramoyl-L-alanyl-D-glutamyl-meso-2,6-diaminopimeloyl-D-alanyl-D-alanine + UDP + H(+). It functions in the pathway cell wall biogenesis; peptidoglycan biosynthesis. Functionally, cell wall formation. Catalyzes the transfer of a GlcNAc subunit on undecaprenyl-pyrophosphoryl-MurNAc-pentapeptide (lipid intermediate I) to form undecaprenyl-pyrophosphoryl-MurNAc-(pentapeptide)GlcNAc (lipid intermediate II). The polypeptide is UDP-N-acetylglucosamine--N-acetylmuramyl-(pentapeptide) pyrophosphoryl-undecaprenol N-acetylglucosamine transferase (Trichormus variabilis (strain ATCC 29413 / PCC 7937) (Anabaena variabilis)).